Reading from the N-terminus, the 85-residue chain is Cytochrome c oxidase assembly factor 3, mitochondrial (85 aa).

The Mitochondrial matrix segment spans residues M1–P26. A helical membrane pass occupies residues F27 to T49. The Mitochondrial intermembrane portion of the chain corresponds to Y50–A85.

Belongs to the COA3 family. In terms of assembly, component of 250-400 kDa complexes called cytochrome oxidase assembly intermediates or COA complexes composed at least COA3, COX14, COX5A, SHY1 and SSC1. Interacts with COX1 and MSS51.

It localises to the mitochondrion inner membrane. Its function is as follows. Required for assembly of cytochrome c oxidase (complex IV). With COX14, negatively regulates COX1 translation and is involved in MSS51 association with newly synthesized COX1. This is Cytochrome c oxidase assembly factor 3, mitochondrial (COA3) from Saccharomyces cerevisiae (strain RM11-1a) (Baker's yeast).